The primary structure comprises 101 residues: Small ribosomal subunit protein uS14 (101 aa).

This sequence belongs to the universal ribosomal protein uS14 family. As to quaternary structure, part of the 30S ribosomal subunit. Contacts proteins S3 and S10.

Its function is as follows. Binds 16S rRNA, required for the assembly of 30S particles and may also be responsible for determining the conformation of the 16S rRNA at the A site. The polypeptide is Small ribosomal subunit protein uS14 (Beijerinckia indica subsp. indica (strain ATCC 9039 / DSM 1715 / NCIMB 8712)).